An 89-amino-acid polypeptide reads, in one-letter code: Small ribosomal subunit protein uS15 (89 aa).

The protein belongs to the universal ribosomal protein uS15 family. As to quaternary structure, part of the 30S ribosomal subunit. Forms a bridge to the 50S subunit in the 70S ribosome, contacting the 23S rRNA.

Functionally, one of the primary rRNA binding proteins, it binds directly to 16S rRNA where it helps nucleate assembly of the platform of the 30S subunit by binding and bridging several RNA helices of the 16S rRNA. Its function is as follows. Forms an intersubunit bridge (bridge B4) with the 23S rRNA of the 50S subunit in the ribosome. This is Small ribosomal subunit protein uS15 from Cyanothece sp. (strain PCC 7425 / ATCC 29141).